A 338-amino-acid chain; its full sequence is Inositol 2-dehydrogenase 3 (338 aa).

This sequence belongs to the Gfo/Idh/MocA family. As to quaternary structure, homotetramer.

It carries out the reaction myo-inositol + NAD(+) = scyllo-inosose + NADH + H(+). In terms of biological role, involved in the oxidation of myo-inositol (MI) to 2-keto-myo-inositol (2KMI or 2-inosose). This is Inositol 2-dehydrogenase 3 from Saccharopolyspora erythraea (strain ATCC 11635 / DSM 40517 / JCM 4748 / NBRC 13426 / NCIMB 8594 / NRRL 2338).